The chain runs to 1017 residues: Adhesion G-protein coupled receptor G2 (1017 aa).

An N-terminal signal peptide occupies residues 1–37 (MVFSVRQCGHVGRTEEVLLTFKIFLVIICLHVVLVTS). The Extracellular segment spans residues 38-627 (LEEDTDNSSL…TSVLPAQMMA (590 aa)). 9 N-linked (GlcNAc...) asparagine glycosylation sites follow: asparagine 44, asparagine 85, asparagine 99, asparagine 111, asparagine 117, asparagine 144, asparagine 162, asparagine 186, and asparagine 194. Positions 301 to 366 (PLSPQPSAPI…NTTSAPPVQT (66 aa)) are disordered. Low complexity predominate over residues 308–320 (APIASSPAIDMPP). 2 stretches are compositionally biased toward polar residues: residues 321-335 (QSET…THVS) and 344-366 (SFSS…PVQT). 11 N-linked (GlcNAc...) asparagine glycosylation sites follow: asparagine 357, asparagine 370, asparagine 435, asparagine 438, asparagine 456, asparagine 461, asparagine 528, asparagine 542, asparagine 547, asparagine 551, and asparagine 597. In terms of domain architecture, GAIN-B spans 462–619 (TTTFVAQDPA…GVLLDLSRTS (158 aa)). Cystine bridges form between cysteine 570–cysteine 601 and cysteine 589–cysteine 603. The GPS stretch occupies residues 570–619 (CVFWDLGRNGGRGGWSDNGCSVKDRRLNETICTCSHLTSFGVLLDLSRTS). The stachel stretch occupies residues 608-619 (SFGVLLDLSRTS). The helical transmembrane segment at 628-648 (LTFITYIGCGLSSIFLSVTLV) threads the bilayer. The Cytoplasmic portion of the chain corresponds to 649 to 667 (TYIAFEKIRRDYPSKILIQ). Residues 668–688 (LCAALLLLNLVFLLDSWIALY) form a helical membrane-spanning segment. Topologically, residues 689–693 (KMQGL) are extracellular. The helical transmembrane segment at 694 to 714 (CISVAVFLHYFLLVSFTWMGL) threads the bilayer. A disulfide bond links cysteine 694 and cysteine 778. Over 715–737 (EAFHMYLALVKVFNTYIRKYILK) the chain is Cytoplasmic. Residues 738–758 (FCIVGWGVPAVVVTIILTISP) traverse the membrane as a helical segment. Residues 759–789 (DNYGLGSYGKFPNGSPDDFCWINNNAVFYIT) are Extracellular-facing. Residues 790-810 (VVGYFCVIFLLNVSMFIVVLV) form a helical membrane-spanning segment. Residues 811-834 (QLCRIKKKKQLGAQRKTSIQDLRS) are Cytoplasmic-facing. A helical transmembrane segment spans residues 835–855 (IAGLTFLLGITWGFAFFAWGP). The Extracellular segment spans residues 856–857 (VN). Asparagine 857 is a glycosylation site (N-linked (GlcNAc...) asparagine). A helical membrane pass occupies residues 858–878 (VTFMYLFAIFNTLQGFFIFIF). Asparagine 868 provides a ligand contact to 3beta-hydroxyandrost-5-en-17-one. Over 879 to 1017 (YCVAKENVRK…RGSLHFIEQM (139 aa)) the chain is Cytoplasmic. The tract at residues 918–939 (QTVNQGVSSSSNSLQSSSNSTN) is disordered. Phosphoserine is present on serine 1010.

It belongs to the G-protein coupled receptor 2 family. Adhesion G-protein coupled receptor (ADGR) subfamily. In terms of assembly, heterodimer of 2 chains generated by proteolytic processing; the large extracellular N-terminal fragment and the membrane-bound C-terminal fragment predominantly remain associated and non-covalently linked. Interacts with CFTR. Proteolytically cleaved into 2 subunits, an extracellular subunit and a seven-transmembrane subunit. Post-translationally, highly glycosylated. As to expression, epididymis-specific expression (at protein level). Both subunits are associated with apical membranes of efferent ductule and proximal epididymal duct epithelia. Mainly expressed in the nonciliated principal cells of the proximal excurrent ducts. Specifically over-expressed in Ewing sarcomas but also up-regulated in a number of carcinomas derived from prostate, kidney or lung.

The protein localises to the apical cell membrane. With respect to regulation, forms a heterodimer of 2 chains generated by proteolytic processing that remain associated through non-covalent interactions mediated by the GAIN-B domain. In the inactivated receptor, the Stachel sequence (also named stalk) is embedded in the GAIN-B domain, where it adopts a beta-strand conformation. On activation, the Stachel moves into the 7 transmembrane region and adopts a twisted hook-shaped configuration that forms contacts within the receptor, leading to coupling of a G-alpha protein, which activates signaling. The cleaved GAIN-B and N-terminal domains can then dissociate from the rest of the receptor. Deoxycorticosterone (DOC) acts as an antagonist of ADGRG2. Functionally, adhesion G-protein coupled receptor (aGPCR) for steroid hormones, such as dehydroepiandrosterone (DHEA; also named 3beta-hydroxyandrost-5-en-17-one) and androstenedione. Involved in a signal transduction pathway controlling epididymal function and male fertility. Ligand binding causes a conformation change that triggers signaling via guanine nucleotide-binding proteins (G proteins) and modulates the activity of downstream effectors, such as adenylate cyclase. ADGRG2 is coupled to G(s) G proteins and mediates activation of adenylate cyclase activity. Also able to couple with G(q) G proteins in vitro. Together with CFTR, required to promote fluid reabsorption within efferent ductule. This is Adhesion G-protein coupled receptor G2 from Homo sapiens (Human).